Reading from the N-terminus, the 87-residue chain is Small ribosomal subunit protein bS16 (87 aa).

The protein belongs to the bacterial ribosomal protein bS16 family.

In Variovorax paradoxus (strain S110), this protein is Small ribosomal subunit protein bS16.